A 396-amino-acid chain; its full sequence is NADH-quinone oxidoreductase subunit D (396 aa).

This sequence belongs to the complex I 49 kDa subunit family. In terms of assembly, NDH-1 is composed of 14 different subunits. Subunits NuoB, C, D, E, F, and G constitute the peripheral sector of the complex.

The protein localises to the cell inner membrane. It carries out the reaction a quinone + NADH + 5 H(+)(in) = a quinol + NAD(+) + 4 H(+)(out). Its function is as follows. NDH-1 shuttles electrons from NADH, via FMN and iron-sulfur (Fe-S) centers, to quinones in the respiratory chain. The immediate electron acceptor for the enzyme in this species is believed to be ubiquinone. Couples the redox reaction to proton translocation (for every two electrons transferred, four hydrogen ions are translocated across the cytoplasmic membrane), and thus conserves the redox energy in a proton gradient. This Brucella anthropi (strain ATCC 49188 / DSM 6882 / CCUG 24695 / JCM 21032 / LMG 3331 / NBRC 15819 / NCTC 12168 / Alc 37) (Ochrobactrum anthropi) protein is NADH-quinone oxidoreductase subunit D.